The chain runs to 342 residues: Uroporphyrinogen decarboxylase (342 aa).

Residues 24–28, Asp-74, Tyr-149, Ser-204, and His-319 contribute to the substrate site; that span reads RQAGR.

The protein belongs to the uroporphyrinogen decarboxylase family. In terms of assembly, homodimer.

The protein localises to the cytoplasm. The catalysed reaction is uroporphyrinogen III + 4 H(+) = coproporphyrinogen III + 4 CO2. It participates in porphyrin-containing compound metabolism; protoporphyrin-IX biosynthesis; coproporphyrinogen-III from 5-aminolevulinate: step 4/4. Catalyzes the decarboxylation of four acetate groups of uroporphyrinogen-III to yield coproporphyrinogen-III. The sequence is that of Uroporphyrinogen decarboxylase from Chelativorans sp. (strain BNC1).